The primary structure comprises 329 residues: Sex comb on midleg-like protein 1 (329 aa).

Phosphoserine occurs at positions 138 and 238. The segment at 138-157 (SPTLPVSRRENNSPSNLPRP) is disordered. The region spanning 258–325 (WSVEAVVLFL…YYIDRLKQGK (68 aa)) is the SAM domain.

This sequence belongs to the SCM family. Ubiquitous. Expressed in fetal and adult tissues.

The protein localises to the nucleus. In terms of biological role, putative Polycomb group (PcG) protein. PcG proteins act by forming multiprotein complexes, which are required to maintain the transcriptionally repressive state of homeotic genes throughout development. May be involved in spermatogenesis during sexual maturation. This Homo sapiens (Human) protein is Sex comb on midleg-like protein 1 (SCML1).